Reading from the N-terminus, the 517-residue chain is Amidophosphoribosyltransferase (517 aa).

An N-acetylmethionine modification is found at Met-1. The propeptide occupies 1–11 (MELEELGIREE). Catalysis depends on Cys-12, which acts as the Nucleophile. The 250-residue stretch at 12 to 261 (CGVFGCIASG…PGEIVEISRH (250 aa)) folds into the Glutamine amidotransferase type-2 domain. [4Fe-4S] cluster is bound at residue Cys-280. 3 residues coordinate Mg(2+): Ser-327, Asp-389, and Asp-390. [4Fe-4S] cluster is bound by residues Cys-426, Cys-503, and Cys-506.

In the C-terminal section; belongs to the purine/pyrimidine phosphoribosyltransferase family. In terms of assembly, homotetramer. Requires Mg(2+) as cofactor. It depends on [4Fe-4S] cluster as a cofactor. As to expression, ubiquitously expressed.

It catalyses the reaction 5-phospho-beta-D-ribosylamine + L-glutamate + diphosphate = 5-phospho-alpha-D-ribose 1-diphosphate + L-glutamine + H2O. It participates in purine metabolism; IMP biosynthesis via de novo pathway; N(1)-(5-phospho-D-ribosyl)glycinamide from 5-phospho-alpha-D-ribose 1-diphosphate: step 1/2. Its function is as follows. Catalyzes the formation of phosphoribosylamine from phosphoribosylpyrophosphate (PRPP) and glutamine. The polypeptide is Amidophosphoribosyltransferase (PPAT) (Homo sapiens (Human)).